The primary structure comprises 738 residues: Nucleoprotein (738 aa).

Residues 334–363 are a coiled coil; the sequence is VNVGEQYQQLREAATEAEKQLQQYAETREL. The interval 418–640 is disordered; the sequence is GDRYPDDNDI…QGSESEALPI (223 aa). The span at 461–476 shows a compositional bias: acidic residues; it reads PYDDESNNYPDYEDSA. A compositionally biased stretch (polar residues) spans 544–564; it reads PGSNTNQPQGNMSSTLQSMTP. Residues 567–594 are compositionally biased toward acidic residues; it reads EESEPDDQKDDDDESLTSLDSEGDEDVE. Positions 616-625 are enriched in polar residues; that stretch reads VDTNQQNGPS.

It belongs to the filoviruses nucleoprotein family. In terms of assembly, homooligomer. Homomultimerizes to form the nucleocapsid. Binds to viral genomic RNA. Interacts with VP35 and VP30 to form the nucleocapsid. Interacts with host PPP2R5C; this interaction leads to VP30 dephosphorylation and viral transcription. Interacts with VP24; this interaction facilitates nucleocapsid assembly and genome packaging. Interacts with matrix protein VP40; this interaction allows recruitment of the nucleocapsid into progeny virions. Interacts with host STAU1. Interacts with host NXF1 (via RNA-binding domain); this interaction recruits NXF1 to the inclusion bodies were viral replication takes place, probably to export viral mRNA-NXF1 complexes from these sites. Interacts with host CCDC92; this interaction sequesters NP in the host cytoplasm. Interacts with host TRIM14. In terms of processing, phosphorylated and O-glycosylated by host. Acetylated by host EP300 in vitro.

Its subcellular location is the virion. It is found in the host cytoplasm. Its function is as follows. Oligomerizes into helical capsid to encapsidate the viral genome, protecting it from nucleases and the cellular innate immune response. VP35 binds to and stabilizes monomeric NP, keeping it soluble. Upon virus replication, NP is recruited to bind cooperatively viral genomic RNA and VP35 is released. The encapsidated genomic RNA is termed the nucleocapsid and serves as template for transcription and replication. The nucleocapsid is helical with a pitch of 10.81 NP per turn and a diameter of about 22nm. Each NP binds to six nucleotides of viral genomic RNA, three being exposed to the solvant and three hidden into the nucleocapsid. Also recruits host PPP2R5C phosphatase to dephosphorylate VP30 and thereby promote viral transcription. Upon virion assembly and budding, NP binds to VP24 and possibly host STAU1. The protein is Nucleoprotein (NP) of Sudan ebolavirus (strain Human/Uganda/Gulu/2000) (SEBOV).